The chain runs to 252 residues: Enolase-phosphatase E1 (252 aa).

Residues Asp-14 and Glu-16 each coordinate Mg(2+). Substrate-binding positions include 143–144 (SS) and Lys-177. Asp-202 contacts Mg(2+).

This sequence belongs to the HAD-like hydrolase superfamily. MasA/MtnC family. In terms of assembly, monomer. Requires Mg(2+) as cofactor.

It localises to the cytoplasm. It is found in the nucleus. It catalyses the reaction 5-methylsulfanyl-2,3-dioxopentyl phosphate + H2O = 1,2-dihydroxy-5-(methylsulfanyl)pent-1-en-3-one + phosphate. It participates in amino-acid biosynthesis; L-methionine biosynthesis via salvage pathway; L-methionine from S-methyl-5-thio-alpha-D-ribose 1-phosphate: step 3/6. The protein operates within amino-acid biosynthesis; L-methionine biosynthesis via salvage pathway; L-methionine from S-methyl-5-thio-alpha-D-ribose 1-phosphate: step 4/6. In terms of biological role, bifunctional enzyme that catalyzes the enolization of 2,3-diketo-5-methylthiopentyl-1-phosphate (DK-MTP-1-P) into the intermediate 2-hydroxy-3-keto-5-methylthiopentenyl-1-phosphate (HK-MTPenyl-1-P), which is then dephosphorylated to form the acireductone 1,2-dihydroxy-3-keto-5-methylthiopentene (DHK-MTPene). The protein is Enolase-phosphatase E1 of Drosophila persimilis (Fruit fly).